A 102-amino-acid polypeptide reads, in one-letter code: NADH-quinone oxidoreductase subunit K 1 (102 aa).

3 helical membrane passes run isoleucine 5–leucine 25, isoleucine 31–phenylalanine 51, and leucine 65–phenylalanine 85.

Belongs to the complex I subunit 4L family. As to quaternary structure, NDH-1 is composed of 14 different subunits. Subunits NuoA, H, J, K, L, M, N constitute the membrane sector of the complex.

Its subcellular location is the cell inner membrane. It catalyses the reaction a quinone + NADH + 5 H(+)(in) = a quinol + NAD(+) + 4 H(+)(out). Functionally, NDH-1 shuttles electrons from NADH, via FMN and iron-sulfur (Fe-S) centers, to quinones in the respiratory chain. The immediate electron acceptor for the enzyme in this species is believed to be ubiquinone. Couples the redox reaction to proton translocation (for every two electrons transferred, four hydrogen ions are translocated across the cytoplasmic membrane), and thus conserves the redox energy in a proton gradient. The sequence is that of NADH-quinone oxidoreductase subunit K 1 from Rhizobium meliloti (strain 1021) (Ensifer meliloti).